Here is a 108-residue protein sequence, read N- to C-terminus: FK506-binding protein 1 (108 aa).

The region spanning 20-108 (GDSVTIHYVG…KFEVELLKIN (89 aa)) is the PPIase FKBP-type domain.

Belongs to the FKBP-type PPIase family. FKBP1 subfamily.

It is found in the cytoplasm. The enzyme catalyses [protein]-peptidylproline (omega=180) = [protein]-peptidylproline (omega=0). Inhibited by both FK506 and rapamycin. Functionally, PPIases accelerate the folding of proteins. It catalyzes the cis-trans isomerization of proline imidic peptide bonds in oligopeptides. The protein is FK506-binding protein 1 (FPR1) of Cryptococcus neoformans var. neoformans serotype D (strain JEC21 / ATCC MYA-565) (Filobasidiella neoformans).